A 297-amino-acid chain; its full sequence is 4-hydroxybenzoate octaprenyltransferase (297 aa).

9 helical membrane passes run 29–49 (IGTY…AEGV), 55–75 (LFIF…VNDF), 102–122 (AWTL…LTNA), 124–141 (TVYL…YPFM), 146–166 (FYPQ…AFTA), 169–189 (GSLP…TVAY), 219–239 (VIIV…GVRF), 241–261 (LGQW…WEFW), and 270–290 (VCFK…AGIV).

This sequence belongs to the UbiA prenyltransferase family. Mg(2+) is required as a cofactor.

The protein resides in the cell inner membrane. It carries out the reaction all-trans-octaprenyl diphosphate + 4-hydroxybenzoate = 4-hydroxy-3-(all-trans-octaprenyl)benzoate + diphosphate. Its pathway is cofactor biosynthesis; ubiquinone biosynthesis. Catalyzes the prenylation of para-hydroxybenzoate (PHB) with an all-trans polyprenyl group. Mediates the second step in the final reaction sequence of ubiquinone-8 (UQ-8) biosynthesis, which is the condensation of the polyisoprenoid side chain with PHB, generating the first membrane-bound Q intermediate 3-octaprenyl-4-hydroxybenzoate. This is 4-hydroxybenzoate octaprenyltransferase from Stutzerimonas stutzeri (strain A1501) (Pseudomonas stutzeri).